A 660-amino-acid chain; its full sequence is MTNIIELPEVLANQIAAGEVVERPASVVKELVENAIDAKSSQITVEIEESGLKMIQVTDNGEGMSHEDLPLSLRRHATSKIKSQSDLFRIRTLGFRGEALPSVASISKITIKTATKEVTHGSLLIATGGEIETLEAISTPTGTKIKVENLFYNTPARLKYMKSLQAELAHIVDVVNRLSLAHPEVAFTLISDGRQLTQTSGTGDLRQAIAGIYGLNTTKKMLVISNADLDFEVSGYVSLPELTRANRNYMTILVNGRYIKNFLLNRAILDGYGSKLMVGRFPIVVIDIQIDPYLADVNVHPTKQEVRISKERELMALISTAISESLKEQDLIPDALENLAKSSTRHFSKPEQTQLPLQSRGLYYDPQKNDFFVKESAVSEKIPETDFYSGAVDNSVKVEKAELLPHSEEVIGPSSVKHASRPQNTFTETDHPNLDLKNRQKLSQMLNRLENEEQSVFPELDYFGQMHGTYLFAQGKDGLFIIDQHAAQERVKYEYYRDKIGDVDSSLQQLLVPYLFEFSGSDFINLQEKMALLNEVGIFLEVYGHNTFILREHPIWMKEEEIASGVYEMCDMLLLTNEVSIKTYRAELAIMMSCKRSIKANHSLDDYSARNLLLQLAQCQNPYNCPHGRPVLINFSKADMEKMFRRIQENHTSLRELGKY.

The protein belongs to the DNA mismatch repair MutL/HexB family.

Functionally, this protein is involved in the repair of mismatches in DNA. It is required for dam-dependent methyl-directed DNA mismatch repair. May act as a 'molecular matchmaker', a protein that promotes the formation of a stable complex between two or more DNA-binding proteins in an ATP-dependent manner without itself being part of a final effector complex. The chain is DNA mismatch repair protein MutL from Streptococcus pyogenes serotype M12 (strain MGAS2096).